Consider the following 313-residue polypeptide: Glyoxylate/hydroxypyruvate reductase A (313 aa).

Arginine 228 is a catalytic residue. Histidine 276 acts as the Proton donor in catalysis.

The protein belongs to the D-isomer specific 2-hydroxyacid dehydrogenase family. GhrA subfamily.

The protein resides in the cytoplasm. It carries out the reaction glycolate + NADP(+) = glyoxylate + NADPH + H(+). It catalyses the reaction (R)-glycerate + NAD(+) = 3-hydroxypyruvate + NADH + H(+). The catalysed reaction is (R)-glycerate + NADP(+) = 3-hydroxypyruvate + NADPH + H(+). Catalyzes the NADPH-dependent reduction of glyoxylate and hydroxypyruvate into glycolate and glycerate, respectively. The sequence is that of Glyoxylate/hydroxypyruvate reductase A from Yersinia enterocolitica serotype O:8 / biotype 1B (strain NCTC 13174 / 8081).